We begin with the raw amino-acid sequence, 317 residues long: Transaldolase (317 aa).

K132 serves as the catalytic Schiff-base intermediate with substrate.

Belongs to the transaldolase family. Type 1 subfamily. In terms of assembly, homodimer.

The protein resides in the cytoplasm. It carries out the reaction D-sedoheptulose 7-phosphate + D-glyceraldehyde 3-phosphate = D-erythrose 4-phosphate + beta-D-fructose 6-phosphate. Its pathway is carbohydrate degradation; pentose phosphate pathway; D-glyceraldehyde 3-phosphate and beta-D-fructose 6-phosphate from D-ribose 5-phosphate and D-xylulose 5-phosphate (non-oxidative stage): step 2/3. Its function is as follows. Transaldolase is important for the balance of metabolites in the pentose-phosphate pathway. The sequence is that of Transaldolase from Haemophilus influenzae (strain 86-028NP).